We begin with the raw amino-acid sequence, 445 residues long: UDP-N-acetylmuramoylalanine--D-glutamate ligase (445 aa).

Gly110–Thr116 serves as a coordination point for ATP.

This sequence belongs to the MurCDEF family.

The protein localises to the cytoplasm. The enzyme catalyses UDP-N-acetyl-alpha-D-muramoyl-L-alanine + D-glutamate + ATP = UDP-N-acetyl-alpha-D-muramoyl-L-alanyl-D-glutamate + ADP + phosphate + H(+). It participates in cell wall biogenesis; peptidoglycan biosynthesis. Cell wall formation. Catalyzes the addition of glutamate to the nucleotide precursor UDP-N-acetylmuramoyl-L-alanine (UMA). The sequence is that of UDP-N-acetylmuramoylalanine--D-glutamate ligase from Christiangramia forsetii (strain DSM 17595 / CGMCC 1.15422 / KT0803) (Gramella forsetii).